Consider the following 99-residue polypeptide: U11-barytoxin-Tl1a (99 aa).

The N-terminal stretch at 1 to 21 is a signal peptide; that stretch reads MKTLVLVAVLGLASLYLLSYA. Positions 22–50 are excised as a propeptide; it reads SEVQQISRDEEDFRALMASFGGIFDTEER. Disulfide bonds link cysteine 57/cysteine 71, cysteine 64/cysteine 76, and cysteine 70/cysteine 90.

The protein belongs to the neurotoxin 10 (Hwtx-1) family. 25 (ICK4) subfamily. As to expression, expressed by the venom gland.

The protein resides in the secreted. Functionally, ion channel inhibitor. This chain is U11-barytoxin-Tl1a, found in Trittame loki (Brush-footed trapdoor spider).